A 222-amino-acid polypeptide reads, in one-letter code: Putative auxin response factor 23 (222 aa).

The TF-B3 DNA-binding region spans 126-222 (FTKVLTASDT…ETGELRVGIR (97 aa)).

The protein belongs to the ARF family. Homo and heterodimers.

The protein localises to the nucleus. Functionally, auxin response factors (ARFs) are transcriptional factors that binds specifically to the DNA sequence 5'-TGTCTC-3' found in the auxin-responsive promoter elements (AuxREs). Could act as transcriptional activator or repressor. Formation of heterodimers with Aux/IAA proteins may alter their ability to modulate early auxin response genes expression. This Arabidopsis thaliana (Mouse-ear cress) protein is Putative auxin response factor 23 (ARF23).